A 91-amino-acid chain; its full sequence is Signal recognition particle 19 kDa protein (91 aa).

This sequence belongs to the SRP19 family. As to quaternary structure, part of the signal recognition particle protein translocation system, which is composed of SRP and FtsY. Archaeal SRP consists of a 7S RNA molecule of 300 nucleotides and two protein subunits: SRP54 and SRP19.

It is found in the cytoplasm. Functionally, involved in targeting and insertion of nascent membrane proteins into the cytoplasmic membrane. Binds directly to 7S RNA and mediates binding of the 54 kDa subunit of the SRP. The protein is Signal recognition particle 19 kDa protein of Methanothermobacter thermautotrophicus (strain ATCC 29096 / DSM 1053 / JCM 10044 / NBRC 100330 / Delta H) (Methanobacterium thermoautotrophicum).